Reading from the N-terminus, the 827-residue chain is Lon protease 2 (827 aa).

The disordered stretch occupies residues Met1–Gly22. The segment covering Ser9–Pro21 has biased composition (low complexity). Residues Leu33 to Arg227 form the Lon N-terminal domain. Position 379–386 (Gly379–Thr386) interacts with ATP. Residues Thr615–Thr796 enclose the Lon proteolytic domain. Residues Ser702 and Lys745 contribute to the active site. Residues Val799–Ala827 form a disordered region.

The protein belongs to the peptidase S16 family. In terms of assembly, homohexamer. Organized in a ring with a central cavity.

It is found in the cytoplasm. The enzyme catalyses Hydrolysis of proteins in presence of ATP.. Its function is as follows. ATP-dependent serine protease that mediates the selective degradation of mutant and abnormal proteins as well as certain short-lived regulatory proteins. Required for cellular homeostasis and for survival from DNA damage and developmental changes induced by stress. Degrades polypeptides processively to yield small peptide fragments that are 5 to 10 amino acids long. Binds to DNA in a double-stranded, site-specific manner. The protein is Lon protease 2 of Myxococcus xanthus.